A 422-amino-acid chain; its full sequence is Protein MANNAN SYNTHESIS-RELATED 1 (422 aa).

The Cytoplasmic portion of the chain corresponds to M1 to R6. A helical; Signal-anchor for type II membrane protein membrane pass occupies residues Q7–H26. At R27–C422 the chain is on the lumenal side. Position 263 to 265 (D263 to R265) interacts with substrate.

It belongs to the glycosyltransferase GT106 family. In terms of tissue distribution, widely expressed.

The protein resides in the golgi apparatus membrane. It functions in the pathway glycan biosynthesis. Its function is as follows. Glycosyltransferase involved in mannan biosynthesis. This is Protein MANNAN SYNTHESIS-RELATED 1 from Arabidopsis thaliana (Mouse-ear cress).